Here is a 286-residue protein sequence, read N- to C-terminus: 4-hydroxy-tetrahydrodipicolinate synthase (286 aa).

Thr-42 contributes to the pyruvate binding site. Tyr-129 acts as the Proton donor/acceptor in catalysis. The active-site Schiff-base intermediate with substrate is the Lys-157. Val-196 is a pyruvate binding site.

Belongs to the DapA family. As to quaternary structure, homotetramer; dimer of dimers.

It is found in the cytoplasm. The enzyme catalyses L-aspartate 4-semialdehyde + pyruvate = (2S,4S)-4-hydroxy-2,3,4,5-tetrahydrodipicolinate + H2O + H(+). It participates in amino-acid biosynthesis; L-lysine biosynthesis via DAP pathway; (S)-tetrahydrodipicolinate from L-aspartate: step 3/4. In terms of biological role, catalyzes the condensation of (S)-aspartate-beta-semialdehyde [(S)-ASA] and pyruvate to 4-hydroxy-tetrahydrodipicolinate (HTPA). The polypeptide is 4-hydroxy-tetrahydrodipicolinate synthase (Chlamydia muridarum (strain MoPn / Nigg)).